The chain runs to 395 residues: Cysteine synthase 2 (395 aa).

Residues 6-22 traverse the membrane as a helical segment; sequence QDLASGIAMGAVFMYLL. Lys83 bears the N6-(pyridoxal phosphate)lysine mark. Pyridoxal 5'-phosphate contacts are provided by residues 228–232 and Ser335; that span reads GTGGT.

This sequence belongs to the cysteine synthase/cystathionine beta-synthase family. Pyridoxal 5'-phosphate is required as a cofactor.

It localises to the mitochondrion. The protein localises to the mitochondrion outer membrane. The enzyme catalyses O-acetyl-L-serine + hydrogen sulfide = L-cysteine + acetate. Functionally, putative cysteine synthase that catalyzes the conversion of O-acetyl-L-serine (OAS) into cysteine, the last step in the cysteine biosynthesis pathway. However, in contrast to cysteine synthase cys11, this CS-like protein seems not to function in cysteine biosynthesis, at least under normal growth conditions, although the transcript is produced. This Schizosaccharomyces pombe (strain 972 / ATCC 24843) (Fission yeast) protein is Cysteine synthase 2 (cys12).